Here is a 144-residue protein sequence, read N- to C-terminus: Mediator of RNA polymerase II transcription subunit 21 (144 aa).

It belongs to the Mediator complex subunit 21 family. Component of the Mediator complex, which is composed of MED1, MED4, MED6, MED7, MED8, MED9, MED10, MED11, MED12, MED13, MED13L, MED14, MED15, MED16, MED17, MED18, MED19, MED20, MED21, MED22, MED23, MED24, MED25, MED26, MED27, MED29, MED30, MED31, CCNC, CDK8 and CDC2L6/CDK11. The MED12, MED13, CCNC and CDK8 subunits form a distinct module termed the CDK8 module. Mediator containing the CDK8 module is less active than Mediator lacking this module in supporting transcriptional activation. Individual preparations of the Mediator complex lacking one or more distinct subunits have been variously termed ARC, CRSP, DRIP, PC2, SMCC and TRAP. Interacts with PPARG. Interacts with THRA in a ligand-dependent fashion.

It is found in the nucleus. Component of the Mediator complex, a coactivator involved in the regulated transcription of nearly all RNA polymerase II-dependent genes. Mediator functions as a bridge to convey information from gene-specific regulatory proteins to the basal RNA polymerase II transcription machinery. Mediator is recruited to promoters by direct interactions with regulatory proteins and serves as a scaffold for the assembly of a functional preinitiation complex with RNA polymerase II and the general transcription factors. The protein is Mediator of RNA polymerase II transcription subunit 21 (MED21) of Macaca fascicularis (Crab-eating macaque).